Reading from the N-terminus, the 576-residue chain is DNA mismatch repair protein MutL (576 aa).

Belongs to the DNA mismatch repair MutL/HexB family.

Functionally, this protein is involved in the repair of mismatches in DNA. It is required for dam-dependent methyl-directed DNA mismatch repair. May act as a 'molecular matchmaker', a protein that promotes the formation of a stable complex between two or more DNA-binding proteins in an ATP-dependent manner without itself being part of a final effector complex. This chain is DNA mismatch repair protein MutL, found in Chlamydia trachomatis serovar A (strain ATCC VR-571B / DSM 19440 / HAR-13).